We begin with the raw amino-acid sequence, 435 residues long: 5-methylthioadenosine/S-adenosylhomocysteine deaminase (435 aa).

Zn(2+) contacts are provided by His-65 and His-67. The substrate site is built by Glu-94, Arg-150, and His-189. Residue His-216 participates in Zn(2+) binding. Substrate-binding residues include Glu-219 and Asp-304. Zn(2+) is bound at residue Asp-304.

Belongs to the metallo-dependent hydrolases superfamily. MTA/SAH deaminase family. It depends on Zn(2+) as a cofactor.

It carries out the reaction S-adenosyl-L-homocysteine + H2O + H(+) = S-inosyl-L-homocysteine + NH4(+). The enzyme catalyses S-methyl-5'-thioadenosine + H2O + H(+) = S-methyl-5'-thioinosine + NH4(+). Catalyzes the deamination of 5-methylthioadenosine and S-adenosyl-L-homocysteine into 5-methylthioinosine and S-inosyl-L-homocysteine, respectively. Is also able to deaminate adenosine. This Bacillus cereus (strain ZK / E33L) protein is 5-methylthioadenosine/S-adenosylhomocysteine deaminase.